A 129-amino-acid chain; its full sequence is Large ribosomal subunit protein bL19 (129 aa).

The protein belongs to the bacterial ribosomal protein bL19 family.

This protein is located at the 30S-50S ribosomal subunit interface and may play a role in the structure and function of the aminoacyl-tRNA binding site. The protein is Large ribosomal subunit protein bL19 of Paraburkholderia phytofirmans (strain DSM 17436 / LMG 22146 / PsJN) (Burkholderia phytofirmans).